A 227-amino-acid chain; its full sequence is 2,3-bisphosphoglycerate-dependent phosphoglycerate mutase (227 aa).

Residues 7 to 14 (RHGFSEWN), 20 to 21 (TG), R59, 86 to 89 (ERHY), K97, 113 to 114 (RR), and 182 to 183 (GN) each bind substrate. The active-site Tele-phosphohistidine intermediate is H8. E86 serves as the catalytic Proton donor/acceptor.

The protein belongs to the phosphoglycerate mutase family. BPG-dependent PGAM subfamily. As to quaternary structure, homodimer.

The enzyme catalyses (2R)-2-phosphoglycerate = (2R)-3-phosphoglycerate. The protein operates within carbohydrate degradation; glycolysis; pyruvate from D-glyceraldehyde 3-phosphate: step 3/5. Catalyzes the interconversion of 2-phosphoglycerate and 3-phosphoglycerate. The sequence is that of 2,3-bisphosphoglycerate-dependent phosphoglycerate mutase from Haemophilus ducreyi (strain 35000HP / ATCC 700724).